The following is a 214-amino-acid chain: 3,4-dihydroxy-2-butanone 4-phosphate synthase (214 aa).

D-ribulose 5-phosphate is bound by residues Arg-37 to Glu-38, Asp-42, Arg-150 to Thr-154, and Glu-174. Glu-38 is a Mg(2+) binding site. His-153 provides a ligand contact to Mg(2+).

Belongs to the DHBP synthase family. As to quaternary structure, homodimer. Requires Mg(2+) as cofactor. The cofactor is Mn(2+).

It catalyses the reaction D-ribulose 5-phosphate = (2S)-2-hydroxy-3-oxobutyl phosphate + formate + H(+). It functions in the pathway cofactor biosynthesis; riboflavin biosynthesis; 2-hydroxy-3-oxobutyl phosphate from D-ribulose 5-phosphate: step 1/1. In terms of biological role, catalyzes the conversion of D-ribulose 5-phosphate to formate and 3,4-dihydroxy-2-butanone 4-phosphate. This chain is 3,4-dihydroxy-2-butanone 4-phosphate synthase, found in Nitratidesulfovibrio vulgaris (strain ATCC 29579 / DSM 644 / CCUG 34227 / NCIMB 8303 / VKM B-1760 / Hildenborough) (Desulfovibrio vulgaris).